Here is a 448-residue protein sequence, read N- to C-terminus: Exodeoxyribonuclease 7 large subunit (448 aa).

The protein belongs to the XseA family. In terms of assembly, heterooligomer composed of large and small subunits.

The protein resides in the cytoplasm. The enzyme catalyses Exonucleolytic cleavage in either 5'- to 3'- or 3'- to 5'-direction to yield nucleoside 5'-phosphates.. In terms of biological role, bidirectionally degrades single-stranded DNA into large acid-insoluble oligonucleotides, which are then degraded further into small acid-soluble oligonucleotides. This chain is Exodeoxyribonuclease 7 large subunit, found in Alcanivorax borkumensis (strain ATCC 700651 / DSM 11573 / NCIMB 13689 / SK2).